We begin with the raw amino-acid sequence, 1154 residues long: ATP-dependent helicase/deoxyribonuclease subunit B (1154 aa).

The region spanning 1 to 284 (MSVRFIIGRS…EQLRHNVRHK (284 aa)) is the UvrD-like helicase ATP-binding domain. 8-15 (GRSGSGKT) is an ATP binding site. The region spanning 279–583 (HNVRHKHEEL…QFSLVPPATD (305 aa)) is the UvrD-like helicase C-terminal domain. Residues cysteine 799, cysteine 1120, cysteine 1123, and cysteine 1129 each coordinate [4Fe-4S] cluster.

The protein belongs to the helicase family. AddB/RexB type 1 subfamily. In terms of assembly, heterodimer of AddA and AddB. Requires Mg(2+) as cofactor. [4Fe-4S] cluster is required as a cofactor.

In terms of biological role, the heterodimer acts as both an ATP-dependent DNA helicase and an ATP-dependent, dual-direction single-stranded exonuclease. Recognizes the chi site generating a DNA molecule suitable for the initiation of homologous recombination. The AddB subunit has 5' -&gt; 3' nuclease activity but not helicase activity. The protein is ATP-dependent helicase/deoxyribonuclease subunit B of Anoxybacillus flavithermus (strain DSM 21510 / WK1).